The following is a 78-amino-acid chain: Large ribosomal subunit protein bL28 (78 aa).

Belongs to the bacterial ribosomal protein bL28 family.

In Synechococcus sp. (strain JA-2-3B'a(2-13)) (Cyanobacteria bacterium Yellowstone B-Prime), this protein is Large ribosomal subunit protein bL28.